We begin with the raw amino-acid sequence, 1511 residues long: Pleiotropic ABC efflux transporter of multiple drugs (1511 aa).

Positions 1–14 (MPEAKLNNNVNDVT) are enriched in polar residues. The interval 1–32 (MPEAKLNNNVNDVTSYSSASSSTENAADLHNY) is disordered. Topologically, residues 1-517 (MPEAKLNNNV…LLIRNMWRLR (517 aa)) are cytoplasmic. Ser-22 carries the post-translational modification Phosphoserine. 2 positions are modified to phosphothreonine: Thr-49 and Thr-51. The segment at 52-71 (AQSMQNSTQSAPNKSDAQSI) is disordered. Phosphoserine occurs at positions 54, 58, and 61. The 250-residue stretch at 161–410 (LRKFQRSKET…FEDMGYVCPS (250 aa)) folds into the ABC transporter 1 domain. A helical membrane pass occupies residues 518 to 542 (NNIGFTLFMILGNCSMALILGSMFF). Residues 543–558 (KIMKKGDTSTFYFRGS) lie on the Extracellular side of the membrane. A helical transmembrane segment spans residues 559–579 (AMFFAILFNAFSSLLEIFSLY). The Cytoplasmic portion of the chain corresponds to 580 to 611 (EARPITEKHRTYSLYHPSADAFASVLSEIPSK). A helical transmembrane segment spans residues 612–628 (LIIAVCFNIIFYFLVDF). Over 629–631 (RRN) the chain is Extracellular. Residues 632–650 (GGVFFFYLLINIVAVFSMS) traverse the membrane as a helical segment. Topologically, residues 651-665 (HLFRCVGSLTKTLSE) are cytoplasmic. The helical transmembrane segment at 666 to 685 (AMVPASMLLLALSMYTGFAI) threads the bilayer. Residues 686-774 (PKKKILRWSK…QYYHKDKWRG (89 aa)) lie on the Extracellular side of the membrane. N-linked (GlcNAc...) asparagine glycosylation is present at Asn-734. A helical transmembrane segment spans residues 775–793 (FGIGMAYVVFFFFVYLFLC). The Cytoplasmic portion of the chain corresponds to 794 to 1237 (EYNEGAKQKG…GTSLQGLQNQ (444 aa)). The disordered stretch occupies residues 824–858 (EKNANDPENVGERSDLSSDRKMLQESSEEESDTYG). Lys-825 participates in a covalent cross-link: Glycyl lysine isopeptide (Lys-Gly) (interchain with G-Cter in ubiquitin). Over residues 833–846 (VGERSDLSSDRKML) the composition is skewed to basic and acidic residues. Ser-837, Ser-840, Ser-841, Ser-849, Ser-850, and Ser-854 each carry phosphoserine. An ABC transporter 2 domain is found at 869-1112 (FHWRNLCYEV…MIDYFESHGA (244 aa)). 905 to 912 (GASGAGKT) is an ATP binding site. The helical transmembrane segment at 1238-1260 (MLAVFMFTVIFNPILQQYLPSFV) threads the bilayer. Residues 1261 to 1291 (QQRDLYEARERPSRTFSWISFIFAQIFVEVP) are Extracellular-facing. A helical transmembrane segment spans residues 1292 to 1313 (WNILAGTIAYFIYYYPIGFYSN). At 1314-1324 (ASAAGQLHERG) the chain is on the cytoplasmic side. A helical transmembrane segment spans residues 1325 to 1349 (ALFWLFSCAFYVYVGSMGLLVISFN). At 1350-1354 (QVAES) the chain is on the extracellular side. Residues 1355 to 1379 (AANLASLLFTMSLSFCGVMTTPSAM) traverse the membrane as a helical segment. The Cytoplasmic portion of the chain corresponds to 1380 to 1388 (PRFWIFMYR). The helical transmembrane segment at 1389–1407 (VSPLTYFIQALLAVGVANV) threads the bilayer. Topologically, residues 1408–1476 (DVKCADYELL…VNSFYSERWR (69 aa)) are extracellular. Asn-1447 carries an N-linked (GlcNAc...) asparagine glycan. The helical transmembrane segment at 1477-1499 (NYGIFICYIAFNYIAGVFFYWLA) threads the bilayer. Over 1500–1511 (RVPKKNGKLSKK) the chain is Cytoplasmic.

It belongs to the ABC transporter superfamily. ABCG family. PDR (TC 3.A.1.205) subfamily. Ubiquitinylation mediates endocytosis and vacuolar degradation. Phosphorylation by casein kinase I stabilizes the protein half-life.

The protein localises to the cell membrane. Its activity is regulated as follows. FK506, isonitrile, enniatin, RU49953, kitasatospora E420, staurosporine CGP42700, prenyl-flavonoids, D-octapeptides were found to be inhibitors in vivo. Vanadate and oligomycin were found to be inhibitors in vitro. Functionally, active efflux of weakly charged organic compounds of 90 cubic Angstroms to 300 cubic Angstroms surface volume. Confers resistance to numerous chemicals including cycloheximide, sulfomethuron methyl, steroids, antiseptics, antibiotics, anticancer, herbicides, mycotoxins, insecticides, ionophores, alkaloids, flavonoids, phenothiazines, organotin compounds, carbazoles, lysosomotropic aminoesters, detergents, rhodamines and other fluorophores, azoles and other antifungals. Exhibits nucleoside triphosphatase activity. In Saccharomyces cerevisiae (strain ATCC 204508 / S288c) (Baker's yeast), this protein is Pleiotropic ABC efflux transporter of multiple drugs (PDR5).